A 211-amino-acid polypeptide reads, in one-letter code: Small ribosomal subunit protein eS1 (211 aa).

The protein belongs to the eukaryotic ribosomal protein eS1 family.

The polypeptide is Small ribosomal subunit protein eS1 (Methanothrix thermoacetophila (strain DSM 6194 / JCM 14653 / NBRC 101360 / PT) (Methanosaeta thermophila)).